We begin with the raw amino-acid sequence, 104 residues long: Large ribosomal subunit protein uL24 (104 aa).

It belongs to the universal ribosomal protein uL24 family. In terms of assembly, part of the 50S ribosomal subunit.

One of two assembly initiator proteins, it binds directly to the 5'-end of the 23S rRNA, where it nucleates assembly of the 50S subunit. In terms of biological role, one of the proteins that surrounds the polypeptide exit tunnel on the outside of the subunit. This chain is Large ribosomal subunit protein uL24, found in Shigella flexneri.